The chain runs to 185 residues: Ribosome-recycling factor (185 aa).

It belongs to the RRF family.

It is found in the cytoplasm. Responsible for the release of ribosomes from messenger RNA at the termination of protein biosynthesis. May increase the efficiency of translation by recycling ribosomes from one round of translation to another. In Pseudomonas putida (strain GB-1), this protein is Ribosome-recycling factor.